The chain runs to 339 residues: Glycerol-3-phosphate dehydrogenase [NAD(P)+] (339 aa).

NADPH contacts are provided by S15, Y16, H36, and K110. The sn-glycerol 3-phosphate site is built by K110, G139, and T141. Position 143 (A143) interacts with NADPH. Positions 195, 248, 258, 259, and 260 each coordinate sn-glycerol 3-phosphate. K195 functions as the Proton acceptor in the catalytic mechanism. R259 serves as a coordination point for NADPH. Residues V283 and E285 each contribute to the NADPH site.

It belongs to the NAD-dependent glycerol-3-phosphate dehydrogenase family.

The protein localises to the cytoplasm. It carries out the reaction sn-glycerol 3-phosphate + NAD(+) = dihydroxyacetone phosphate + NADH + H(+). It catalyses the reaction sn-glycerol 3-phosphate + NADP(+) = dihydroxyacetone phosphate + NADPH + H(+). It functions in the pathway membrane lipid metabolism; glycerophospholipid metabolism. Functionally, catalyzes the reduction of the glycolytic intermediate dihydroxyacetone phosphate (DHAP) to sn-glycerol 3-phosphate (G3P), the key precursor for phospholipid synthesis. This is Glycerol-3-phosphate dehydrogenase [NAD(P)+] from Pectobacterium carotovorum subsp. carotovorum (strain PC1).